Here is a 508-residue protein sequence, read N- to C-terminus: Methionine--tRNA ligase (508 aa).

The 'HIGH' region signature appears at 12 to 22 (YYVNDIPHIGH). A 'KMSKS' region motif is present at residues 295–299 (KISKS). Position 298 (lysine 298) interacts with ATP.

Belongs to the class-I aminoacyl-tRNA synthetase family. MetG type 2B subfamily. In terms of assembly, monomer.

The protein localises to the cytoplasm. The catalysed reaction is tRNA(Met) + L-methionine + ATP = L-methionyl-tRNA(Met) + AMP + diphosphate. In terms of biological role, is required not only for elongation of protein synthesis but also for the initiation of all mRNA translation through initiator tRNA(fMet) aminoacylation. This Rickettsia conorii (strain ATCC VR-613 / Malish 7) protein is Methionine--tRNA ligase.